A 330-amino-acid chain; its full sequence is L-lactate dehydrogenase (330 aa).

Residues valine 31, aspartate 52, lysine 57, and 96–97 (GA) contribute to the NAD(+) site. Residues glutamine 99, arginine 105, and 137–140 (NPVD) contribute to the substrate site. Residues 135–137 (VSN) and serine 160 contribute to the NAD(+) site. Residue 165-168 (DTAR) participates in substrate binding. 2 residues coordinate beta-D-fructose 1,6-bisphosphate: arginine 170 and histidine 185. Histidine 192 (proton acceptor) is an active-site residue. Tyrosine 238 is modified (phosphotyrosine). Threonine 247 is a binding site for substrate.

It belongs to the LDH/MDH superfamily. LDH family. As to quaternary structure, homotetramer.

Its subcellular location is the cytoplasm. It carries out the reaction (S)-lactate + NAD(+) = pyruvate + NADH + H(+). It functions in the pathway fermentation; pyruvate fermentation to lactate; (S)-lactate from pyruvate: step 1/1. With respect to regulation, allosterically activated by fructose 1,6-bisphosphate (FBP). In terms of biological role, catalyzes the conversion of lactate to pyruvate. The chain is L-lactate dehydrogenase from Gloeobacter violaceus (strain ATCC 29082 / PCC 7421).